Here is a 293-residue protein sequence, read N- to C-terminus: Phosphatidylserine decarboxylase proenzyme (293 aa).

Residues Asp90, His147, and Ser254 each act as charge relay system; for autoendoproteolytic cleavage activity in the active site. The active-site Schiff-base intermediate with substrate; via pyruvic acid; for decarboxylase activity is the Ser254. Pyruvic acid (Ser); by autocatalysis is present on Ser254.

Belongs to the phosphatidylserine decarboxylase family. PSD-B subfamily. Prokaryotic type I sub-subfamily. As to quaternary structure, heterodimer of a large membrane-associated beta subunit and a small pyruvoyl-containing alpha subunit. It depends on pyruvate as a cofactor. In terms of processing, is synthesized initially as an inactive proenzyme. Formation of the active enzyme involves a self-maturation process in which the active site pyruvoyl group is generated from an internal serine residue via an autocatalytic post-translational modification. Two non-identical subunits are generated from the proenzyme in this reaction, and the pyruvate is formed at the N-terminus of the alpha chain, which is derived from the carboxyl end of the proenzyme. The autoendoproteolytic cleavage occurs by a canonical serine protease mechanism, in which the side chain hydroxyl group of the serine supplies its oxygen atom to form the C-terminus of the beta chain, while the remainder of the serine residue undergoes an oxidative deamination to produce ammonia and the pyruvoyl prosthetic group on the alpha chain. During this reaction, the Ser that is part of the protease active site of the proenzyme becomes the pyruvoyl prosthetic group, which constitutes an essential element of the active site of the mature decarboxylase.

It is found in the cell membrane. The enzyme catalyses a 1,2-diacyl-sn-glycero-3-phospho-L-serine + H(+) = a 1,2-diacyl-sn-glycero-3-phosphoethanolamine + CO2. Its pathway is phospholipid metabolism; phosphatidylethanolamine biosynthesis; phosphatidylethanolamine from CDP-diacylglycerol: step 2/2. Its function is as follows. Catalyzes the formation of phosphatidylethanolamine (PtdEtn) from phosphatidylserine (PtdSer). The protein is Phosphatidylserine decarboxylase proenzyme of Yersinia pseudotuberculosis serotype O:1b (strain IP 31758).